A 173-amino-acid chain; its full sequence is Ribosome maturation factor RimM (173 aa).

In terms of domain architecture, PRC barrel spans 93-166; that stretch reads EDEYLVSDMI…KMLVDTIEGM (74 aa).

Belongs to the RimM family. In terms of assembly, binds ribosomal protein uS19.

The protein resides in the cytoplasm. Functionally, an accessory protein needed during the final step in the assembly of 30S ribosomal subunit, possibly for assembly of the head region. Essential for efficient processing of 16S rRNA. May be needed both before and after RbfA during the maturation of 16S rRNA. It has affinity for free ribosomal 30S subunits but not for 70S ribosomes. In Fusobacterium nucleatum subsp. nucleatum (strain ATCC 25586 / DSM 15643 / BCRC 10681 / CIP 101130 / JCM 8532 / KCTC 2640 / LMG 13131 / VPI 4355), this protein is Ribosome maturation factor RimM.